The primary structure comprises 2555 residues: Squalestatin hexaketide synthase clz14 (2555 aa).

Residues 1 to 84 are disordered; sequence MDVSKEAGHH…PNATSTTTTT (84 aa). Residues 10 to 84 are compositionally biased toward low complexity; sequence HANGFANGNT…PNATSTTTTT (75 aa). Positions 91–511 constitute a Ketosynthase family 3 (KS3) domain; sequence QVPVAICGIG…GSNTHIIIDS (421 aa). Active-site for beta-ketoacyl synthase activity residues include C261, H398, and H435. Residues 611–928 form a malonyl-CoA:ACP transacylase (MAT) domain region; sequence FIFTGQGAQW…LEGIGKLFCF (318 aa). The tract at residues 975 to 1104 is N-terminal hotdog fold; sequence HELLGERSLE…GLVTASVVTS (130 aa). The interval 975–1256 is dehydratase (DH) domain; sequence HELLGERSLE…RGFKCKKTDD (282 aa). Residues 975–1260 enclose the PKS/mFAS DH domain; that stretch reads HELLGERSLE…CKKTDDAFIQ (286 aa). H1007 serves as the catalytic Proton acceptor; for dehydratase activity. The interval 1117–1260 is C-terminal hotdog fold; sequence SRKVDTSRWY…CKKTDDAFIQ (144 aa). D1177 (proton donor; for dehydratase activity) is an active-site residue. The methyltransferase (CMet) domain stretch occupies residues 1424–1595; that stretch reads SFFQAAGLNK…GFEGAGTVVL (172 aa). Residues 1821-2141 are enoyl reductase (ER) (ER) domain; that stretch reads GMLNTLHWVG…RGVHMGRIVV (321 aa). The tract at residues 2165–2338 is ketoreductase (KR) domain; the sequence is STYLLTGGMG…PASVIDIAAI (174 aa). The 79-residue stretch at 2468-2546 folds into the Carrier domain; the sequence is IIFAQEIAKR…SLGRLATKRL (79 aa). An O-(pantetheine 4'-phosphoryl)serine modification is found at S2505.

It functions in the pathway secondary metabolite biosynthesis. In terms of biological role, highly reducing polyketide synthase (HR-PKS); part of the gene cluster that mediates the biosynthesis of squalestatin S1 (SQS1, also known as zaragozic acid A), a heavily oxidized fungal polyketide that offers potent cholesterol lowering activity by targeting squalene synthase (SS). SQS1 is composed of a 2,8-dioxobicyclic[3.2.1]octane-3,4,5-tricarboxyclic acid core that is connected to two lipophilic polyketide arms. These initial steps feature the priming of an unusual benzoic acid starter unit onto the highly reducing polyketide synthase clz14, followed by oxaloacetate extension and product release to generate a tricarboxylic acid containing product. The phenylalanine ammonia lyase (PAL) clz10 and the acyl-CoA ligase clz12 are involved in transforming phenylalanine into benzoyl-CoA. The citrate synthase-like protein clz17 is involved in connecting the C-alpha-carbons of the hexaketide chain and oxaloacetate to afford the tricarboxylic acid unit. The potential hydrolytic enzymes, clz11 and clz13, are in close proximity to pks2 and may participate in product release. On the other side, the tetraketide arm is synthesized by a the squalestatin tetraketide synthase clz2 and enzymatically esterified to the core in the last biosynthetic step, by the acetyltransferase clz6. The biosynthesis of the tetraketide must involve 3 rounds of chain extension. After the first and second rounds methyl-transfer occurs, and in all rounds of extension the ketoreductase and dehydratase are active. The enoyl reductase and C-MeT of clz2 are not active in the final round of extension. The acetyltransferase clz6 appears to have a broad substrate selectivity for its acyl CoA substrate, allowing the in vitro synthesis of novel squalestatins. The biosynthesis of SQS1 requires several oxidative steps likely performed by oxidoreductases clz3, clz15 and clz16. Finally, in support of the identification of the cluster as being responsible for SQS1 production, the cluster contains a gene encoding a putative squalene synthase (SS) clz20, suggesting a likely mechanism for self-resistance. This is Squalestatin hexaketide synthase clz14 from Cochliobolus lunatus (Filamentous fungus).